A 292-amino-acid polypeptide reads, in one-letter code: Lyso-ornithine lipid O-acyltransferase (292 aa).

A helical transmembrane segment spans residues 11-31 (GMLLVMVSLVLMPVQILCLWL). The disordered stretch occupies residues 258–292 (RLRGRSRSAAKGEPAPACSAAPDIPSDAQRSRLAP).

The protein belongs to the 1-acyl-sn-glycerol-3-phosphate acyltransferase family. OlsA subfamily.

The protein localises to the membrane. It catalyses the reaction a lyso-ornithine lipid + a fatty acyl-[ACP] = an N(2)-[(3R)-3-(acyloxy)acyl]-L-ornithine lipid + holo-[ACP]. Its pathway is lipid metabolism. Its function is as follows. Catalyzes the second step in the formation of ornithine lipids, which are phosphorus-free membrane lipids. Uses acyl-acyl carrier protein (acyl-AcpP) as an acyl donor and converts lyso-ornithine lipid (LOL) into ornithine lipid (OL). This Rhizobium meliloti (strain 1021) (Ensifer meliloti) protein is Lyso-ornithine lipid O-acyltransferase.